The chain runs to 272 residues: HMP-PP phosphatase (272 aa).

The active-site Nucleophile is D8. The Mg(2+) site is built by D8, D10, and D212.

It belongs to the HAD-like hydrolase superfamily. Cof family. Requires Mg(2+) as cofactor.

The catalysed reaction is 4-amino-2-methyl-5-(diphosphooxymethyl)pyrimidine + H2O = 4-amino-2-methyl-5-(phosphooxymethyl)pyrimidine + phosphate + H(+). Its function is as follows. Catalyzes the hydrolysis of 4-amino-2-methyl-5-hydroxymethylpyrimidine pyrophosphate (HMP-PP) to 4-amino-2-methyl-5-hydroxymethylpyrimidine phosphate (HMP-P). The polypeptide is HMP-PP phosphatase (Salmonella arizonae (strain ATCC BAA-731 / CDC346-86 / RSK2980)).